We begin with the raw amino-acid sequence, 222 residues long: Physcion biosynthesis cluster O-methyltransferase (222 aa).

It belongs to the methyltransferase superfamily.

The enzyme catalyses emodin + S-adenosyl-L-methionine = physcion + S-adenosyl-L-homocysteine. The protein operates within secondary metabolite biosynthesis. O-methyltransferase; part of the gene cluster that mediates the biosynthesis of physcion, a natural anthraquinone fungicide that can prevent plant fungal infections. Within the pathway, the O-methyltransferase AcOMT catalyzes the last step by transferring a methyl group to C-6 hydroxyl of emodin to form physcion. AcOMT may also methylate the C-6 hydroxyl group of emodin anthrone to produce physcion-anthrone B. The pathway begins with the polyketide synthase AcPKS that condenses 8 malonyl-CoA units to synthesize atrochrysone thioester which is released from the synthase by the atrochrysone carboxyl ACP thioesterase AcTE that breaks the thioester bond and leads to free atrochrysone carboxylic acid. Spontaneous decarboxylation of atrochrysone carboxylic acid leads to the formation of atrochrysone. Then, atrochrysone undergoes spontaneous dehydration and oxidation, giving the products emodin anthrone and emodin. The O-methyltransferase AcOMT then methylates the C-6 hydroxyl of emodin to form physcion. The polypeptide is Physcion biosynthesis cluster O-methyltransferase (Aspergillus chevalieri (Eurotium chevalieri)).